The following is a 1040-amino-acid chain: Neprilysin-4 (1040 aa).

The segment at 1-27 is disordered; it reads MSRHSQLKLAMPSVHGAPATAPGSPMN. Residues 1 to 45 form a required for maintaining muscle integrity region; it reads MSRHSQLKLAMPSVHGAPATAPGSPMNAKARSVKLGLGVNQRTGR. The Cytoplasmic portion of the chain corresponds to 1 to 55; sequence MSRHSQLKLAMPSVHGAPATAPGSPMNAKARSVKLGLGVNQRTGRVQWCPGLTCC. The chain crosses the membrane as a helical; Signal-anchor for type II membrane protein span at residues 56-76; the sequence is KMLLLLPVVMLPLTLVLILIM. The Extracellular segment spans residues 77–1040; that stretch reads RLDGMLAALQ…MNPQKKCSVW (964 aa). The 790-residue stretch at 251–1040 folds into the Peptidase M13 domain; sequence EEGTREGIRM…MNPQKKCSVW (790 aa). Cystine bridges form between cysteine 277–cysteine 1025, cysteine 285–cysteine 985, cysteine 452–cysteine 700, and cysteine 909–cysteine 1037. N-linked (GlcNAc...) asparagine glycosylation is found at asparagine 387, asparagine 593, asparagine 723, and asparagine 819. Histidine 872 lines the Zn(2+) pocket. The active site involves glutamate 873. Zn(2+) is bound at residue histidine 876. Asparagine 916 is a glycosylation site (N-linked (GlcNAc...) asparagine). Glutamate 934 is a binding site for Zn(2+). Residue aspartate 938 is the Proton donor of the active site. A glycan (N-linked (GlcNAc...) asparagine) is linked at asparagine 969.

Belongs to the peptidase M13 family. In terms of assembly, interacts (via intracellular domain) with the putative carbohydrate kinase CG3534. It depends on Zn(2+) as a cofactor. As to expression, expressed in the gonads and testes of adults, and the adult and larval brain (at protein level). In embryos, expressed in the pericardial, muscle founder and glia cells (at protein level). In stage 12 embryos, expressed in specific dorsal muscle founder cells such as DA1 and DO2, and also in the certain pericardial progenitor cells where expression persists throughout embryogenesis. Expressed in the glia cells of the embryonic, larval and adult central nervous system. Expressed in the somatic muscles of larvae, pupae and adults. Isoform A: Detected in the male abdomen (at protein level). Isoform B: Not detected in the male or female abdomen (at protein level).

Its subcellular location is the cell membrane. The protein resides in the sarcoplasmic reticulum. It localises to the cytoplasm. The enzyme catalyses Preferential cleavage of polypeptides between hydrophobic residues, particularly with Phe or Tyr at P1'.. Functionally, metalloendoprotease which cleaves peptides at the amino side of hydrophobic residues - such as the hormones Akh and Dh31, and the neuropeptides Allatostatins (AST1, AST2, AST3 and AST4), Crz, Drosulfakinins (DSK-I and DSK-II), Lk, sNPF and the tachykinin peptides TK-1, TK-2, TK-4 and TK-5. Functions in female fertility, memory formation and may also act in regulating insulin signaling and food intake. Likely to be involved in controlling feeding behavior and the expression of insulin-like peptides by cleaving various regulatory peptides that include certain Drosulfakinins, Allatostatins and tachykinin peptides. Required in females for normal patterns of egg laying and hatching. Required in the dorsal paired medial neurons for the proper formation of long-term (LTM) and middle-term memories (MTM). Also required in the mushroom body neurons where it functions redundantly with neprilysins Nep2 and Nep3, in normal LTM formation. Cleaves angiotensin-1 and tachykinin neuropeptide substance P. Functions in maintaining muscle integrity, possibly independently of its endopeptidase activity. The polypeptide is Neprilysin-4 (Drosophila melanogaster (Fruit fly)).